The sequence spans 133 residues: p53 and DNA damage-regulated protein 1 (133 aa).

Belongs to the prefoldin subunit beta family. Component of the PAQosome complex which is responsible for the biogenesis of several protein complexes and which consists of R2TP complex members RUVBL1, RUVBL2, RPAP3 and PIH1D1, URI complex members PFDN2, PFDN6, PDRG1, UXT and URI1 as well as ASDURF, POLR2E and DNAAF10/WDR92.

It is found in the cytoplasm. Its function is as follows. May play a role in chaperone-mediated protein folding. This chain is p53 and DNA damage-regulated protein 1 (PDRG1), found in Bos taurus (Bovine).